Reading from the N-terminus, the 478-residue chain is Ubiquitin carboxyl-terminal hydrolase calypso (478 aa).

The 229-residue stretch at 11–239 folds into the UCH catalytic domain; that stretch reads GWLELESDPG…IRFNLMAVVP (229 aa). Catalysis depends on C97, which acts as the Nucleophile. H176 functions as the Proton donor in the catalytic mechanism. The ULD domain maps to 400-428; that stretch reads NYDEFICTFLSMLAHQGELGDLVSQHLIT. The segment at 430-478 is positively charged C-terminal tail required for binding nucleosomes; that stretch reads RKPNMGSVQNSGSRGVVRNYNKKTTTNGSSPKTPSSKRRRGRTKYRKRK. Over residues 432-442 the composition is skewed to polar residues; that stretch reads PNMGSVQNSGS. The segment at 432 to 478 is disordered; it reads PNMGSVQNSGSRGVVRNYNKKTTTNGSSPKTPSSKRRRGRTKYRKRK. Residues 464–478 are compositionally biased toward basic residues; sequence SSKRRRGRTKYRKRK.

Belongs to the peptidase C12 family. BAP1 subfamily. In terms of assembly, catalytic component of the polycomb repressive deubiquitinase (PR-DUB) complex, at least composed of caly/calypso, Asx and sba (MBD5/6 homolog). The PR-DUB complex associates with nucleosomes to mediate deubiquitination of histone H2AK118ub1 substrates; the association requires the positively charged C-terminal tail of caly, probably due to direct binding of DNA. Interacts (via ULD domain) with Asx (via DEUBAD domain); the interaction produces a stable heterodimer with a composite binding site for ubiquitin. Homodimerizes (via coiled-coil hinge-region between the UCH and ULD domains) to mediate assembly of 2 copies of the caly-Asx heterodimer into a bisymmetric tetramer; dimerization enhances PR-DUB association with nucleosomes.

The protein localises to the nucleus. It catalyses the reaction Thiol-dependent hydrolysis of ester, thioester, amide, peptide and isopeptide bonds formed by the C-terminal Gly of ubiquitin (a 76-residue protein attached to proteins as an intracellular targeting signal).. In terms of biological role, catalytic component of the polycomb repressive deubiquitinase (PR-DUB) complex, a complex that specifically mediates deubiquitination of histone H2A monoubiquitinated at 'Lys-119' (H2AK118ub1). Mediates bisymmetric organization of the PR-DUB complex and is involved in association with nucleosomes to mediate deubiquitination. Does not deubiquitinate monoubiquitinated histone H2B. Required to maintain the transcriptionally repressive state of homeotic genes throughout development. The PR-DUB complex has weak or no activity toward 'Lys-48'- and 'Lys-63'-linked polyubiquitin chains. Polycomb group (PcG) protein. The protein is Ubiquitin carboxyl-terminal hydrolase calypso of Aedes aegypti (Yellowfever mosquito).